The chain runs to 230 residues: 2,3-bisphosphoglycerate-dependent phosphoglycerate mutase 2 (230 aa).

Residues 8-15 (RHGQSEWN), 21-22 (TG), arginine 60, 87-90 (ERHY), lysine 98, 114-115 (RR), and 183-184 (GN) contribute to the substrate site. The active-site Tele-phosphohistidine intermediate is histidine 9. The Proton donor/acceptor role is filled by glutamate 87.

It belongs to the phosphoglycerate mutase family. BPG-dependent PGAM subfamily.

It catalyses the reaction (2R)-2-phosphoglycerate = (2R)-3-phosphoglycerate. Its pathway is carbohydrate degradation; glycolysis; pyruvate from D-glyceraldehyde 3-phosphate: step 3/5. Its function is as follows. Catalyzes the interconversion of 2-phosphoglycerate and 3-phosphoglycerate. The sequence is that of 2,3-bisphosphoglycerate-dependent phosphoglycerate mutase 2 from Lactiplantibacillus plantarum (strain ATCC BAA-793 / NCIMB 8826 / WCFS1) (Lactobacillus plantarum).